The sequence spans 367 residues: Chorismate synthase (367 aa).

The disordered stretch occupies residues 39 to 60 (EEFSHDLQRRASGKSRHTSARR). The NADP(+) site is built by Arg48 and Arg54. Residues 125-127 (RSS), 238-239 (NA), Gly278, 293-297 (KPTSS), and Arg319 each bind FMN.

It belongs to the chorismate synthase family. As to quaternary structure, homotetramer. It depends on FMNH2 as a cofactor.

The enzyme catalyses 5-O-(1-carboxyvinyl)-3-phosphoshikimate = chorismate + phosphate. The protein operates within metabolic intermediate biosynthesis; chorismate biosynthesis; chorismate from D-erythrose 4-phosphate and phosphoenolpyruvate: step 7/7. Functionally, catalyzes the anti-1,4-elimination of the C-3 phosphate and the C-6 proR hydrogen from 5-enolpyruvylshikimate-3-phosphate (EPSP) to yield chorismate, which is the branch point compound that serves as the starting substrate for the three terminal pathways of aromatic amino acid biosynthesis. This reaction introduces a second double bond into the aromatic ring system. This is Chorismate synthase from Xanthomonas oryzae pv. oryzae (strain MAFF 311018).